A 399-amino-acid chain; its full sequence is Probable 3-ketosteroid-9-alpha-monooxygenase, oxygenase component (399 aa).

The Rieske domain maps to Trp26–Val128. Positions 67, 69, 86, and 89 each coordinate [2Fe-2S] cluster. Residues Asn175, His181, His186, and Asp307 each coordinate Fe cation.

In terms of assembly, homotrimer. The two-component system 3-ketosteroid-9-alpha-monooxygenase is composed of an oxygenase component KshA and a reductase component KshB. It depends on [2Fe-2S] cluster as a cofactor. Fe cation serves as cofactor.

Its function is as follows. Could catalyze the introduction of a 9alpha-hydroxyl moiety into the ring B of 3-ketosteroid substrates. This is Probable 3-ketosteroid-9-alpha-monooxygenase, oxygenase component from Rhodococcus rhodochrous.